A 367-amino-acid chain; its full sequence is Glutamate 5-kinase (367 aa).

Position 9 (lysine 9) interacts with ATP. Residues serine 49, aspartate 136, and asparagine 148 each coordinate substrate. ATP is bound by residues 168 to 169 (TD) and 210 to 216 (TGGMKSK). The 75-residue stretch at 276 to 350 (SGQIEVDAGA…GMQSQDIQVR (75 aa)) folds into the PUA domain.

The protein belongs to the glutamate 5-kinase family.

The protein localises to the cytoplasm. The enzyme catalyses L-glutamate + ATP = L-glutamyl 5-phosphate + ADP. Its pathway is amino-acid biosynthesis; L-proline biosynthesis; L-glutamate 5-semialdehyde from L-glutamate: step 1/2. Catalyzes the transfer of a phosphate group to glutamate to form L-glutamate 5-phosphate. The sequence is that of Glutamate 5-kinase from Bacillus cereus (strain ATCC 14579 / DSM 31 / CCUG 7414 / JCM 2152 / NBRC 15305 / NCIMB 9373 / NCTC 2599 / NRRL B-3711).